Consider the following 309-residue polypeptide: Coproporphyrin III ferrochelatase (309 aa).

Residues Tyr-12, Thr-14, Arg-29, 45 to 46, Ser-53, and Tyr-124 each bind Fe-coproporphyrin III; that span reads RY. Residues His-182 and Glu-263 each contribute to the Fe(2+) site.

It belongs to the ferrochelatase family. As to quaternary structure, monomer.

The protein localises to the cytoplasm. The enzyme catalyses Fe-coproporphyrin III + 2 H(+) = coproporphyrin III + Fe(2+). It functions in the pathway porphyrin-containing compound metabolism; protoheme biosynthesis. In terms of biological role, involved in coproporphyrin-dependent heme b biosynthesis. Catalyzes the insertion of ferrous iron into coproporphyrin III to form Fe-coproporphyrin III. The polypeptide is Coproporphyrin III ferrochelatase (Listeria monocytogenes serovar 1/2a (strain ATCC BAA-679 / EGD-e)).